Here is a 464-residue protein sequence, read N- to C-terminus: Protein transport protein HofB homolog (464 aa).

Residue 264–271 participates in ATP binding; sequence GPTGSGKS.

Belongs to the GSP E family.

This is Protein transport protein HofB homolog (hofB) from Haemophilus influenzae (strain ATCC 51907 / DSM 11121 / KW20 / Rd).